The sequence spans 446 residues: tRNA modification GTPase MnmE (446 aa).

(6S)-5-formyl-5,6,7,8-tetrahydrofolate contacts are provided by arginine 24, glutamate 81, and lysine 120. The TrmE-type G domain maps to 216–368 (GLHAVLIGPP…LHIRLRELAL (153 aa)). Position 226 (asparagine 226) interacts with K(+). Residues 226–231 (NAGKSS), 245–251 (TDVAGTT), and 270–273 (DTAG) contribute to the GTP site. Serine 230 serves as a coordination point for Mg(2+). Residues threonine 245, valine 247, and threonine 250 each coordinate K(+). Position 251 (threonine 251) interacts with Mg(2+). Residue lysine 446 participates in (6S)-5-formyl-5,6,7,8-tetrahydrofolate binding.

It belongs to the TRAFAC class TrmE-Era-EngA-EngB-Septin-like GTPase superfamily. TrmE GTPase family. As to quaternary structure, homodimer. Heterotetramer of two MnmE and two MnmG subunits. The cofactor is K(+).

It is found in the cytoplasm. Its function is as follows. Exhibits a very high intrinsic GTPase hydrolysis rate. Involved in the addition of a carboxymethylaminomethyl (cmnm) group at the wobble position (U34) of certain tRNAs, forming tRNA-cmnm(5)s(2)U34. This is tRNA modification GTPase MnmE from Xanthomonas oryzae pv. oryzae (strain KACC10331 / KXO85).